Reading from the N-terminus, the 330-residue chain is B-cell receptor CD22 (330 aa).

Residues 1-17 (MHLLGPWLLLLEYLAFS) form the signal peptide. The Ig-like V-type domain occupies 18–136 (DSSKWAFEHP…MERIHLNVSE (119 aa)). Residues 18–330 (DSSKWAFEHP…VFLQVQYAPE (313 aa)) are Extracellular-facing. 3 cysteine pairs are disulfide-bonded: cysteine 37–cysteine 165, cysteine 42–cysteine 100, and cysteine 159–cysteine 217. Residues asparagine 65, asparagine 99, and asparagine 110 are each glycosylated (N-linked (GlcNAc...) asparagine). Arginine 118 is an N-acetylneuraminate binding site. Asparagine 133, asparagine 162, asparagine 187, and asparagine 229 each carry an N-linked (GlcNAc...) asparagine glycan. Ig-like C2-type domains lie at 141-233 (PHIQ…DTVQ) and 240-324 (PKLK…VFLQ). The cysteines at positions 263 and 307 are disulfide-linked.

This sequence belongs to the immunoglobulin superfamily. SIGLEC (sialic acid binding Ig-like lectin) family. Predominantly monomer of isoform CD22-beta. Also found as heterodimer of isoform CD22-beta and a shorter isoform. Interacts with PTPN6/SHP-1, LYN, SYK, PIK3R1/PIK3R2 and PLCG1 upon phosphorylation. Interacts with GRB2, INPP5D and SHC1 upon phosphorylation. May form a complex with INPP5D/SHIP, GRB2 and SHC1.

It localises to the cell membrane. In terms of biological role, most highly expressed siglec (sialic acid-binding immunoglobulin-like lectin) on B-cells that plays a role in various aspects of B-cell biology including differentiation, antigen presentation, and trafficking to bone marrow. Binds to alpha 2,6-linked sialic acid residues of surface molecules such as CD22 itself, CD45 and IgM in a cis configuration. Can also bind to ligands on other cells as an adhesion molecule in a trans configuration. Acts as an inhibitory coreceptor on the surface of B-cells and inhibits B-cell receptor induced signaling, characterized by inhibition of the calcium mobilization and cellular activation. Mechanistically, the immunoreceptor tyrosine-based inhibitory motif domain is phosphorylated by the Src kinase LYN, which in turn leads to the recruitment of the protein tyrosine phosphatase 1/PTPN6, leading to the negative regulation of BCR signaling. If this negative signaling from is of sufficient strength, apoptosis of the B-cell can be induced. In Pongo pygmaeus (Bornean orangutan), this protein is B-cell receptor CD22.